Reading from the N-terminus, the 317-residue chain is Porphobilinogen deaminase (317 aa).

Position 242 is an S-(dipyrrolylmethanemethyl)cysteine (Cys242).

This sequence belongs to the HMBS family. Monomer. Dipyrromethane is required as a cofactor.

It carries out the reaction 4 porphobilinogen + H2O = hydroxymethylbilane + 4 NH4(+). It functions in the pathway porphyrin-containing compound metabolism; protoporphyrin-IX biosynthesis; coproporphyrinogen-III from 5-aminolevulinate: step 2/4. In terms of biological role, tetrapolymerization of the monopyrrole PBG into the hydroxymethylbilane pre-uroporphyrinogen in several discrete steps. The polypeptide is Porphobilinogen deaminase (Colwellia psychrerythraea (strain 34H / ATCC BAA-681) (Vibrio psychroerythus)).